Consider the following 416-residue polypeptide: CinA-like protein (416 aa).

It belongs to the CinA family.

This chain is CinA-like protein, found in Amoebophilus asiaticus (strain 5a2).